Here is a 303-residue protein sequence, read N- to C-terminus: Biphenyl-2,3-diol 1,2-dioxygenase (303 aa).

VOC domains lie at 5–119 and 143–264; these read SLGY…IYYG and GLGH…YGWS. His-146, His-210, and Glu-260 together coordinate Fe cation. The disordered stretch occupies residues 283–303; sequence WGHKSVRDKALRATKHEQQPE. Residues 287-303 are compositionally biased toward basic and acidic residues; sequence SVRDKALRATKHEQQPE.

Belongs to the extradiol ring-cleavage dioxygenase family. As to quaternary structure, homooctamer. Fe(2+) serves as cofactor.

It carries out the reaction biphenyl-2,3-diol + O2 = 2-hydroxy-6-oxo-6-phenylhexa-2,4-dienoate + H(+). It participates in xenobiotic degradation; biphenyl degradation; 2-hydroxy-2,4-pentadienoate and benzoate from biphenyl: step 3/4. The polypeptide is Biphenyl-2,3-diol 1,2-dioxygenase (bphC) (Metapseudomonas furukawaii (Pseudomonas furukawaii)).